The primary structure comprises 488 residues: Arginine biosynthesis bifunctional protein ArgJ, mitochondrial (488 aa).

6 residues coordinate substrate: Thr227, Lys250, Thr261, Glu340, Asn483, and Ser488. Residue Thr261 is the Nucleophile of the active site.

This sequence belongs to the ArgJ family. In terms of assembly, heterodimer of an alpha and a beta chain. In terms of processing, the alpha and beta chains are autoproteolytically processed from a single precursor protein within the mitochondrion.

It localises to the mitochondrion matrix. It catalyses the reaction N(2)-acetyl-L-ornithine + L-glutamate = N-acetyl-L-glutamate + L-ornithine. The catalysed reaction is L-glutamate + acetyl-CoA = N-acetyl-L-glutamate + CoA + H(+). It functions in the pathway amino-acid biosynthesis; L-arginine biosynthesis; L-ornithine and N-acetyl-L-glutamate from L-glutamate and N(2)-acetyl-L-ornithine (cyclic): step 1/1. It participates in amino-acid biosynthesis; L-arginine biosynthesis; N(2)-acetyl-L-ornithine from L-glutamate: step 1/4. Catalyzes two activities which are involved in the cyclic version of arginine biosynthesis: the synthesis of acetylglutamate from glutamate and acetyl-CoA, and of ornithine by transacetylation between acetylornithine and glutamate. The polypeptide is Arginine biosynthesis bifunctional protein ArgJ, mitochondrial (Thalassiosira pseudonana (Marine diatom)).